The following is a 252-amino-acid chain: 2-succinyl-6-hydroxy-2,4-cyclohexadiene-1-carboxylate synthase (252 aa).

The protein belongs to the AB hydrolase superfamily. MenH family. Monomer.

The catalysed reaction is 5-enolpyruvoyl-6-hydroxy-2-succinyl-cyclohex-3-ene-1-carboxylate = (1R,6R)-6-hydroxy-2-succinyl-cyclohexa-2,4-diene-1-carboxylate + pyruvate. The protein operates within quinol/quinone metabolism; 1,4-dihydroxy-2-naphthoate biosynthesis; 1,4-dihydroxy-2-naphthoate from chorismate: step 3/7. It functions in the pathway quinol/quinone metabolism; menaquinone biosynthesis. Its function is as follows. Catalyzes a proton abstraction reaction that results in 2,5-elimination of pyruvate from 2-succinyl-5-enolpyruvyl-6-hydroxy-3-cyclohexene-1-carboxylate (SEPHCHC) and the formation of 2-succinyl-6-hydroxy-2,4-cyclohexadiene-1-carboxylate (SHCHC). The chain is 2-succinyl-6-hydroxy-2,4-cyclohexadiene-1-carboxylate synthase from Escherichia coli O7:K1 (strain IAI39 / ExPEC).